Consider the following 643-residue polypeptide: 1-deoxy-D-xylulose-5-phosphate synthase (643 aa).

Thiamine diphosphate is bound by residues histidine 72 and 113-115 (GHA). Aspartate 144 lines the Mg(2+) pocket. Thiamine diphosphate-binding positions include 145-146 (GA), asparagine 174, tyrosine 287, and glutamate 370. Asparagine 174 serves as a coordination point for Mg(2+).

Belongs to the transketolase family. DXPS subfamily. As to quaternary structure, homodimer. Mg(2+) serves as cofactor. It depends on thiamine diphosphate as a cofactor.

It catalyses the reaction D-glyceraldehyde 3-phosphate + pyruvate + H(+) = 1-deoxy-D-xylulose 5-phosphate + CO2. It functions in the pathway metabolic intermediate biosynthesis; 1-deoxy-D-xylulose 5-phosphate biosynthesis; 1-deoxy-D-xylulose 5-phosphate from D-glyceraldehyde 3-phosphate and pyruvate: step 1/1. In terms of biological role, catalyzes the acyloin condensation reaction between C atoms 2 and 3 of pyruvate and glyceraldehyde 3-phosphate to yield 1-deoxy-D-xylulose-5-phosphate (DXP). The chain is 1-deoxy-D-xylulose-5-phosphate synthase from Prochlorococcus marinus (strain SARG / CCMP1375 / SS120).